The primary structure comprises 134 residues: Small ribosomal subunit protein uS8c (134 aa).

The protein belongs to the universal ribosomal protein uS8 family. In terms of assembly, part of the 30S ribosomal subunit.

The protein resides in the plastid. Its subcellular location is the chloroplast. In terms of biological role, one of the primary rRNA binding proteins, it binds directly to 16S rRNA central domain where it helps coordinate assembly of the platform of the 30S subunit. The polypeptide is Small ribosomal subunit protein uS8c (rps8) (Helianthus annuus (Common sunflower)).